The chain runs to 351 residues: uncharacterized protein (351 aa).

Positions 215, 226, 290, 319, and 333 each coordinate Mn(2+).

The protein belongs to the peptidase M24B family. The cofactor is Mn(2+).

This is an uncharacterized protein from Staphylococcus aureus (strain MRSA252).